A 766-amino-acid polypeptide reads, in one-letter code: Protein zer-1 homolog (766 aa).

At Ala2 the chain carries N-acetylalanine. 3 LRR repeats span residues 226 to 245 (SLVL…IVQL), 246 to 268 (HKLR…KLTR), and 278 to 302 (LGNL…KMEE). ARM repeat units follow at residues 427-467 (RSEQ…NFSI), 511-556 (DNDH…NITD), 558-600 (TPDN…NVAE), 602-643 (KELR…HIMF), and 714-756 (PDKY…HCSN).

Belongs to the zyg-11 family. In terms of assembly, interacts with the ELOC-ELOB/Elongin BC complex. Part of an E3 ubiquitin ligase complex including ZER1, CUL2 and Elongin BC. Expressed in testis, spermatocytes and spermatids (at protein level). Expressed in spermatocytes, spermatids, prostate, skeletal muscle, ovary, small intestine, heart, brain and pancreas.

Its function is as follows. Serves as substrate adapter subunit in the E3 ubiquitin ligase complex ZYG11B-CUL2-Elongin BC. Acts to target substrates bearing N-terminal degrons for proteasomal degradation with the first four residues of substrates being the key recognition elements. Involved in the clearance of proteolytic fragments generated by caspase cleavage during apoptosis since N-terminal glycine degrons are strongly enriched at caspase cleavage sites. Also important in the quality control of protein N-myristoylation in which N-terminal glycine degrons are conditionally exposed after a failure of N-myristoylation. The chain is Protein zer-1 homolog from Homo sapiens (Human).